Here is a 294-residue protein sequence, read N- to C-terminus: 4-hydroxy-tetrahydrodipicolinate synthase (294 aa).

Threonine 47 is a pyruvate binding site. Catalysis depends on tyrosine 135, which acts as the Proton donor/acceptor. Lysine 163 (schiff-base intermediate with substrate) is an active-site residue. Position 206 (isoleucine 206) interacts with pyruvate.

It belongs to the DapA family. Homodimer.

It is found in the cytoplasm. It catalyses the reaction L-aspartate 4-semialdehyde + pyruvate = (2S,4S)-4-hydroxy-2,3,4,5-tetrahydrodipicolinate + H2O + H(+). The protein operates within amino-acid biosynthesis; L-lysine biosynthesis via DAP pathway; (S)-tetrahydrodipicolinate from L-aspartate: step 3/4. In terms of biological role, catalyzes the condensation of (S)-aspartate-beta-semialdehyde [(S)-ASA] and pyruvate to 4-hydroxy-tetrahydrodipicolinate (HTPA). The sequence is that of 4-hydroxy-tetrahydrodipicolinate synthase from Staphylococcus carnosus (strain TM300).